The primary structure comprises 433 residues: Xylose isomerase (433 aa).

Positions 305 and 307 each coordinate Mg(2+).

This sequence belongs to the xylose isomerase family. Homotetramer. Mg(2+) is required as a cofactor.

The protein localises to the cytoplasm. The catalysed reaction is alpha-D-xylose = alpha-D-xylulofuranose. In Cereibacter sphaeroides (strain KD131 / KCTC 12085) (Rhodobacter sphaeroides), this protein is Xylose isomerase.